Reading from the N-terminus, the 356-residue chain is DNA polymerase IV (356 aa).

In terms of domain architecture, UmuC spans 7-188; sequence IIHIDMDCFY…LPLKKISGVG (182 aa). Mg(2+)-binding residues include D11 and D106. E107 is an active-site residue.

The protein belongs to the DNA polymerase type-Y family. As to quaternary structure, monomer. The cofactor is Mg(2+).

The protein localises to the cytoplasm. The catalysed reaction is DNA(n) + a 2'-deoxyribonucleoside 5'-triphosphate = DNA(n+1) + diphosphate. In terms of biological role, poorly processive, error-prone DNA polymerase involved in untargeted mutagenesis. Copies undamaged DNA at stalled replication forks, which arise in vivo from mismatched or misaligned primer ends. These misaligned primers can be extended by PolIV. Exhibits no 3'-5' exonuclease (proofreading) activity. May be involved in translesional synthesis, in conjunction with the beta clamp from PolIII. This chain is DNA polymerase IV, found in Glaesserella parasuis serovar 5 (strain SH0165) (Haemophilus parasuis).